The chain runs to 170 residues: uncharacterized protein (170 aa).

Residues 35 to 57 (EEVMPATAPSTDPAVPKDAQEAD) form a disordered region.

This is an uncharacterized protein from Candida tsukubaensis (Yeast).